Consider the following 216-residue polypeptide: GTP cyclohydrolase 1 2 (216 aa).

The protein belongs to the GTP cyclohydrolase I family. In terms of assembly, homomer.

It catalyses the reaction GTP + H2O = 7,8-dihydroneopterin 3'-triphosphate + formate + H(+). It participates in cofactor biosynthesis; 7,8-dihydroneopterin triphosphate biosynthesis; 7,8-dihydroneopterin triphosphate from GTP: step 1/1. The polypeptide is GTP cyclohydrolase 1 2 (folE2) (Nostoc sp. (strain PCC 7120 / SAG 25.82 / UTEX 2576)).